A 232-amino-acid polypeptide reads, in one-letter code: Chaperone protein CssC (232 aa).

The N-terminal stretch at 1 to 20 (MKSKLIILLTLVPFSSFSTG) is a signal peptide.

It belongs to the periplasmic pilus chaperone family.

The protein localises to the periplasm. Its function is as follows. Involved in the biogenesis of the CS6 fimbria. The protein is Chaperone protein CssC (cssC) of Escherichia coli.